The primary structure comprises 162 residues: NADH-quinone oxidoreductase subunit I (162 aa).

4Fe-4S ferredoxin-type domains lie at 54–83 (RRYE…INST) and 93–122 (SSYE…ETNI). Residues Cys-63, Cys-66, Cys-69, Cys-73, Cys-102, Cys-105, Cys-108, and Cys-112 each coordinate [4Fe-4S] cluster.

The protein belongs to the complex I 23 kDa subunit family. NDH-1 is composed of 14 different subunits. Subunits NuoA, H, J, K, L, M, N constitute the membrane sector of the complex. [4Fe-4S] cluster is required as a cofactor.

The protein resides in the cell inner membrane. The enzyme catalyses a quinone + NADH + 5 H(+)(in) = a quinol + NAD(+) + 4 H(+)(out). Its function is as follows. NDH-1 shuttles electrons from NADH, via FMN and iron-sulfur (Fe-S) centers, to quinones in the respiratory chain. The immediate electron acceptor for the enzyme in this species is believed to be ubiquinone. Couples the redox reaction to proton translocation (for every two electrons transferred, four hydrogen ions are translocated across the cytoplasmic membrane), and thus conserves the redox energy in a proton gradient. This is NADH-quinone oxidoreductase subunit I from Francisella philomiragia subsp. philomiragia (strain ATCC 25017 / CCUG 19701 / FSC 153 / O#319-036).